The sequence spans 189 residues: Small ribosomal subunit protein uS5 (189 aa).

An S5 DRBM domain is found at Phe-22–Val-85.

Belongs to the universal ribosomal protein uS5 family. As to quaternary structure, part of the 30S ribosomal subunit. Contacts proteins S4 and S8.

In terms of biological role, with S4 and S12 plays an important role in translational accuracy. Functionally, located at the back of the 30S subunit body where it stabilizes the conformation of the head with respect to the body. This Agrobacterium fabrum (strain C58 / ATCC 33970) (Agrobacterium tumefaciens (strain C58)) protein is Small ribosomal subunit protein uS5.